A 260-amino-acid polypeptide reads, in one-letter code: Indole-3-glycerol phosphate synthase (260 aa).

It belongs to the TrpC family.

It carries out the reaction 1-(2-carboxyphenylamino)-1-deoxy-D-ribulose 5-phosphate + H(+) = (1S,2R)-1-C-(indol-3-yl)glycerol 3-phosphate + CO2 + H2O. It participates in amino-acid biosynthesis; L-tryptophan biosynthesis; L-tryptophan from chorismate: step 4/5. This chain is Indole-3-glycerol phosphate synthase, found in Koribacter versatilis (strain Ellin345).